Here is a 459-residue protein sequence, read N- to C-terminus: Zinc finger protein 213 (459 aa).

The 82-residue stretch at 45–126 (RQRFRQFCYG…VALVEDLQKQ (82 aa)) folds into the SCAN box domain. A disordered region spans residues 128 to 188 (VKAWRQDVPS…ALLKEGRPGE (61 aa)). The 91-residue stretch at 202–292 (VALGDIPFYF…ENRPRAALGP (91 aa)) folds into the KRAB domain. C2H2-type zinc fingers lie at residues 317–339 (HSCG…QRTH), 345–367 (HKCP…QGVH), 373–395 (FSCS…QRIH), 401–423 (FGCS…RRVH), and 429–451 (FGCG…QSLH).

The protein belongs to the krueppel C2H2-type zinc-finger protein family. Widely expressed with highest levels in testis.

It localises to the nucleus. Functionally, may be involved in transcriptional regulation. The chain is Zinc finger protein 213 (ZNF213) from Homo sapiens (Human).